The sequence spans 683 residues: Long-chain fatty acid transport protein 3 (683 aa).

A helical transmembrane segment spans residues 3-23 (ALLLLPLLLLLPLLLLKLHLW). Positions 119–128 (GGDSGEGSAG) are enriched in gly residues. Residues 119 to 145 (GGDSGEGSAGEGERAAPGAGDAAAGSG) are disordered. Residues 133–145 (AAPGAGDAAAGSG) show a composition bias toward low complexity. ATP contacts are provided by residues 288-292 (TSGTT), H331, T428, D528, R543, and K635.

It belongs to the ATP-dependent AMP-binding enzyme family. Expressed in bronchial and bronchiolar epithelial cells (at protein level).

The protein localises to the mitochondrion membrane. The enzyme catalyses a fatty acid(in) = a fatty acid(out). The catalysed reaction is a long-chain fatty acid + ATP + CoA = a long-chain fatty acyl-CoA + AMP + diphosphate. It carries out the reaction hexadecanoate + ATP + CoA = hexadecanoyl-CoA + AMP + diphosphate. It catalyses the reaction (9Z)-octadecenoate + ATP + CoA = (9Z)-octadecenoyl-CoA + AMP + diphosphate. The enzyme catalyses (9Z,12Z)-octadecadienoate + ATP + CoA = (9Z,12Z)-octadecadienoyl-CoA + AMP + diphosphate. The catalysed reaction is (5Z,8Z,11Z,14Z)-eicosatetraenoate + ATP + CoA = (5Z,8Z,11Z,14Z)-eicosatetraenoyl-CoA + AMP + diphosphate. It carries out the reaction a very long-chain fatty acid + ATP + CoA = a very long-chain fatty acyl-CoA + AMP + diphosphate. It catalyses the reaction tetracosanoate + ATP + CoA = tetracosanoyl-CoA + AMP + diphosphate. Functionally, mainly functions as an acyl-CoA ligase catalyzing the ATP-dependent formation of fatty acyl-CoA using LCFA and very-long-chain fatty acids (VLCFA) as substrates. Can mediate the levels of long-chain fatty acids (LCFA) in the cell by facilitating their transport across membranes. This Homo sapiens (Human) protein is Long-chain fatty acid transport protein 3.